Consider the following 276-residue polypeptide: Cell wall synthesis protein KRE9 (276 aa).

An N-terminal signal peptide occupies residues 1–21; sequence MRLQRNSIICALVFLVSFVLG.

This sequence belongs to the KRE9/KNH1 family. Post-translationally, O-glycosylated.

The protein localises to the secreted. It localises to the cell wall. Functionally, involved in cell wall beta(1-&gt;6) glucan synthesis. The protein is Cell wall synthesis protein KRE9 of Saccharomyces cerevisiae (strain ATCC 204508 / S288c) (Baker's yeast).